The chain runs to 518 residues: MKKLKINYLFIGILALLLAVALWPSIPWFGKADNRIAAIQARGELRVSTIHTPLTYNEINGKPFGLDYELAKQFADYLGVKLKVTVRQNISQLFDDLDNGNADLLAAGLVYNSERVKNYQPGPTYYSVSQQLVYKVSQYRPRTLGNLTAEQLTVAPGHVVVNDLQTLKDTKFPELSWKVDDKKGSAELMEDVIEGKLDYTIADSVAISLFQRVHPELAVALDITDEQPVTWFSPLDGDNTLSAALLDFFNEMNEDGTLARIEEKYLGHGDDFDYVDTRTFLRAVDAVLPQLKPLFEKYAEEIDWRLLAAIAYQESHWDAQATSPTGVRGMMMLTKNTAQSLGITDRTDAEQSISGGVRYLQDMMSKVPESVPENERIWFALAAYNMGYAHMLDARALTAKTKGNPDSWADVKQCLPLLSQKPYYSKLTYGYARGHEAYAYVENIRKYQISLVGYLQEKEKQATEAAMQLAQDYPAVSPTELGKEKFPFLSFLSQSSSNYLTHSPSLLFSRKGSEEKQN.

The N-terminal stretch at 1–21 is a signal peptide; it reads MKKLKINYLFIGILALLLAVA. Residues 22–269 are non-LT domain; it reads LWPSIPWFGK…RIEEKYLGHG (248 aa). Residues 270 to 518 are LT domain; that stretch reads DDFDYVDTRT…SRKGSEEKQN (249 aa). Glutamate 314 is an active-site residue.

It in the N-terminal section; belongs to the bacterial solute-binding protein 3 family. In the C-terminal section; belongs to the transglycosylase Slt family.

It localises to the cell outer membrane. The enzyme catalyses Exolytic cleavage of the (1-&gt;4)-beta-glycosidic linkage between N-acetylmuramic acid (MurNAc) and N-acetylglucosamine (GlcNAc) residues in peptidoglycan, from either the reducing or the non-reducing ends of the peptidoglycan chains, with concomitant formation of a 1,6-anhydrobond in the MurNAc residue.. In terms of biological role, murein-degrading enzyme that degrades murein glycan strands and insoluble, high-molecular weight murein sacculi, with the concomitant formation of a 1,6-anhydromuramoyl product. Lytic transglycosylases (LTs) play an integral role in the metabolism of the peptidoglycan (PG) sacculus. Their lytic action creates space within the PG sacculus to allow for its expansion as well as for the insertion of various structures such as secretion systems and flagella. The sequence is that of Membrane-bound lytic murein transglycosylase F from Shigella sonnei (strain Ss046).